A 241-amino-acid chain; its full sequence is MVDYYEVLGVQRHASPEDIKKAYRKLALKWHPDKNPENKEEAERKFKQVAEAYEVLSDAKKRDIYDKYGKEGLNGGGGGGSHFDSPFEFGFTFRNPDDVFREFFGGRDPFSFEFFEDPFEDFFGNRRGPRGSRSRGTGSFFSAFSGFPSFGSGFSSFDTGFTSFGSLGHGGLTSFSSTSFGGGGMGNFKSISTSTKMVNGRKITTKRIVENGQERVEVEEDGQLKSLTINGKEQLLRLDNK.

Residues 2-146 (VDYYEVLGVQ…TGSFFSAFSG (145 aa)) form an interaction with HSP70 region. Residues 3–69 (DYYEVLGVQR…KKRDIYDKYG (67 aa)) form the J domain. The tract at residues 119-241 (FEDFFGNRRG…KEQLLRLDNK (123 aa)) is interaction with KRT18. At Arg-135 the chain carries Omega-N-methylarginine.

As to quaternary structure, homooligomer. Interacts with BAG3, HSPB8 and STUB1. Interacts with ALKBH1. Interacts with HSP70, KRT18 and PTTG.

The protein localises to the cytoplasm. Its subcellular location is the perinuclear region. It localises to the nucleus. The protein resides in the myofibril. It is found in the sarcomere. The protein localises to the z line. In terms of biological role, has a stimulatory effect on the ATPase activity of HSP70 in a dose-dependent and time-dependent manner and hence acts as a co-chaperone of HSP70. Plays an indispensable role in the organization of KRT8/KRT18 filaments. Acts as an endogenous molecular chaperone for neuronal proteins including huntingtin. Suppresses aggregation and toxicity of polyglutamine-containing, aggregation-prone proteins. Also reduces cellular toxicity and caspase-3 activity. This Macaca fascicularis (Crab-eating macaque) protein is DnaJ homolog subfamily B member 6.